A 342-amino-acid polypeptide reads, in one-letter code: Holliday junction branch migration complex subunit RuvB (342 aa).

Residues 1-179 form a large ATPase domain (RuvB-L) region; the sequence is MTNILSPEKS…FGIPMRLNFY (179 aa). Residues I18, R19, G60, K63, T64, T65, 126–128, R169, Y179, and R216 each bind ATP; that span reads EDF. Mg(2+) is bound at residue T64. Positions 180–250 are small ATPAse domain (RuvB-S); sequence NTEELKKVLN…ISDFGLKRLE (71 aa). Residues 253–342 form a head domain (RuvB-H) region; sequence RIGLDSNDYR…HQFNIFNENE (90 aa). Residues R289, R308, and R313 each coordinate DNA.

This sequence belongs to the RuvB family. As to quaternary structure, homohexamer. Forms an RuvA(8)-RuvB(12)-Holliday junction (HJ) complex. HJ DNA is sandwiched between 2 RuvA tetramers; dsDNA enters through RuvA and exits via RuvB. An RuvB hexamer assembles on each DNA strand where it exits the tetramer. Each RuvB hexamer is contacted by two RuvA subunits (via domain III) on 2 adjacent RuvB subunits; this complex drives branch migration. In the full resolvosome a probable DNA-RuvA(4)-RuvB(12)-RuvC(2) complex forms which resolves the HJ.

It localises to the cytoplasm. The catalysed reaction is ATP + H2O = ADP + phosphate + H(+). The RuvA-RuvB-RuvC complex processes Holliday junction (HJ) DNA during genetic recombination and DNA repair, while the RuvA-RuvB complex plays an important role in the rescue of blocked DNA replication forks via replication fork reversal (RFR). RuvA specifically binds to HJ cruciform DNA, conferring on it an open structure. The RuvB hexamer acts as an ATP-dependent pump, pulling dsDNA into and through the RuvAB complex. RuvB forms 2 homohexamers on either side of HJ DNA bound by 1 or 2 RuvA tetramers; 4 subunits per hexamer contact DNA at a time. Coordinated motions by a converter formed by DNA-disengaged RuvB subunits stimulates ATP hydrolysis and nucleotide exchange. Immobilization of the converter enables RuvB to convert the ATP-contained energy into a lever motion, pulling 2 nucleotides of DNA out of the RuvA tetramer per ATP hydrolyzed, thus driving DNA branch migration. The RuvB motors rotate together with the DNA substrate, which together with the progressing nucleotide cycle form the mechanistic basis for DNA recombination by continuous HJ branch migration. Branch migration allows RuvC to scan DNA until it finds its consensus sequence, where it cleaves and resolves cruciform DNA. The chain is Holliday junction branch migration complex subunit RuvB from Rickettsia peacockii (strain Rustic).